The following is a 295-amino-acid chain: Aquaporin-9 (295 aa).

At 1 to 24 (MPSEKDGAKKSLMQRLALKSRIAK) the chain is on the cytoplasmic side. Residues 25–43 (ETLSEFLGTFIMIVLGCSS) form a helical membrane-spanning segment. Residues 44 to 57 (IAQAVLSRERFGGI) lie on the Extracellular side of the membrane. The helical transmembrane segment at 58–77 (ITINIGFASAVVMALYVTFG) threads the bilayer. The Cytoplasmic portion of the chain corresponds to 78–79 (IS). The discontinuously helical intramembrane region spans 80 to 92 (GGHINPAVSFAMC). Positions 84–86 (NPA) match the NPA 1 motif. Topologically, residues 93-98 (AFGRME) are cytoplasmic. Residues 99–123 (WFKFPFYVGAQFLGAFVGAATVFGI) traverse the membrane as a helical segment. Residues 124-160 (YYDGLMAFAGGKLLVVGENATAFIFATYPAPFISTPG) are Extracellular-facing. A helical transmembrane segment spans residues 161-178 (AFVDQVVSTMFLLLIVFA). The Cytoplasmic segment spans residues 179 to 190 (MFDSRNLGVPRG). A helical membrane pass occupies residues 191 to 207 (LEPVVIGLLIIVLSCSL). At 208 to 210 (GLN) the chain is on the extracellular side. The segment at residues 211-225 (SGCAMNPARDLSPRL) is an intramembrane region (discontinuously helical). Residues 216-218 (NPA) carry the NPA 2 motif. At 226–243 (FTALAGWGFEVFTVGNNF) the chain is on the extracellular side. The chain crosses the membrane as a helical span at residues 244 to 264 (WWIPVVGPMIGAFLGGLIYIL). Over 265–295 (FIQMHHSKLDPDMKAEPSENNLEKHELSVIM) the chain is Cytoplasmic.

The protein belongs to the MIP/aquaporin (TC 1.A.8) family. In terms of assembly, homotetramer; each monomer provides an independent glycerol/water pore. Detected in testis and liver. Detected in immature spermatocytes and in interstitial Leydig cells.

The protein localises to the cell membrane. It is found in the basolateral cell membrane. It carries out the reaction H2O(in) = H2O(out). The enzyme catalyses glycerol(in) = glycerol(out). The catalysed reaction is urea(in) = urea(out). It catalyses the reaction (S)-lactate(in) = (S)-lactate(out). It carries out the reaction NH4(+)(in) = NH4(+)(out). The enzyme catalyses uracil(in) = uracil(out). The catalysed reaction is adenine(out) = adenine(in). It catalyses the reaction 3-hydroxybutanoate(in) = 3-hydroxybutanoate(out). It carries out the reaction D-sorbitol(in) = D-sorbitol(out). The enzyme catalyses D-mannitol(in) = D-mannitol(out). The catalysed reaction is H2O2(out) = H2O2(in). It catalyses the reaction arsenite(in) = arsenite(out). It carries out the reaction selenite(in) = selenite(out). Its activity is regulated as follows. Channel activity is inhibited by mercury ions and phloretin. Its function is as follows. Aquaglyceroporins form homotetrameric transmembrane channels, with each monomer independently mediating glycerol and water transport across the plasma membrane along their osmotic gradient. AQP9 is the primary route for glycerol uptake in hepatocytes, supporting hepatic gluconeogenesis. It exhibits broad specificity and may transport various small, non-charged solutes, including carbamides, polyols, purines, and pyrimidines. AQP9 may also facilitate hepatic urea extrusion. Due to its permeability to lactate, AQP9 might participate in the astrocyte-to-neuron lactate shuttle, supplying neurons with energy. Additionally, AQP9 is permeable to arsenite, contributing to arsenic excretion by the liver and providing partial protection against arsenic toxicity. It is also permeable to H2O2 in vivo. Could also be permeable to ammonium. The chain is Aquaporin-9 from Rattus norvegicus (Rat).